The following is a 323-amino-acid chain: Peroxisomal targeting signal 2 receptor (323 aa).

WD repeat units follow at residues 65 to 96, 109 to 141, 153 to 184, 196 to 227, 240 to 271, and 284 to 315; these read DWND…QLWD, EHAQ…KLWD, GHES…RIWD, AHQA…RGWD, GHTY…RFWN, and HHTE…KIYD.

It belongs to the WD repeat peroxin-7 family. Interacts with PEX5; interaction only takes place when PEX7 is associated with cargo proteins. Interacts with VWA8. Ubiquitous. Highest expression in pancreas, skeletal muscle and heart.

Its subcellular location is the cytoplasm. It localises to the cytosol. The protein resides in the peroxisome matrix. Receptor required for the peroxisomal import of proteins containing a C-terminal PTS2-type peroxisomal targeting signal. Specifically binds to cargo proteins containing a PTS2 peroxisomal targeting signal in the cytosol. Cargo protein-binding triggers interaction with PEX5 and formation of a ternary complex composed of PEX5 and PEX7 along with PTS2-containing cargo proteins, which is tranlocated into peroxisomes by passing through the PEX13-PEX14 docking complex. The chain is Peroxisomal targeting signal 2 receptor from Homo sapiens (Human).